The following is a 454-amino-acid chain: UDP-N-acetylmuramate--L-alanine ligase (454 aa).

ATP is bound at residue 112 to 118 (GTHGKTT).

This sequence belongs to the MurCDEF family.

The protein resides in the cytoplasm. The catalysed reaction is UDP-N-acetyl-alpha-D-muramate + L-alanine + ATP = UDP-N-acetyl-alpha-D-muramoyl-L-alanine + ADP + phosphate + H(+). It participates in cell wall biogenesis; peptidoglycan biosynthesis. In terms of biological role, cell wall formation. The protein is UDP-N-acetylmuramate--L-alanine ligase of Oleidesulfovibrio alaskensis (strain ATCC BAA-1058 / DSM 17464 / G20) (Desulfovibrio alaskensis).